Reading from the N-terminus, the 724-residue chain is MADEDLIFRLEGVDGGGSSGAGRHGDSDTDSDDDEGYFICPITDDHMSNQNVNSKGQGYYNNLLKTECGSTGSPASSFHFKEAWKHAIEKAKHMPDPWAEFHLEDIATEHATRHRYNAVTGEWLKDEVLIKMASQPFGRGAMRECFRTKKLSNFLHAQHWKGASNYVAKRYLEPVDRSVYFEDVQLQMEAKLWGEEYNRHKPPKQVDIMQMCIIELKDRQGQPLFHLEHYIEGKYIKYNSNSGFVRDDNIRLTPQAFSHFTFERSGHQLIVVDIQGVGDLYTDPQIHTEKGTDFGDGNLGVRGMALFFYSHACNRICQSMGLAPFDLSPREQDAVNQSTKLLQSAKTILRGTEEKCGSPRIRTLSGSRPPLLLRLSENSGDENMSDVTFDSLPSSPSSATPHSQKLDHLHWPVFGDLDNMGPRDHDRMDNHRDSENSGDSGYPSEKRSDLDDPEPREHGHSNGNRRPESDEDSLGSSGRVCVETWNLLNPSRLHLPRPSAVALEVQRLNALDLGRKIGKSVLGKVHLAMVRYHEGGRFCEKDEEWDQESAIFHLEHAADLGELEAIVGLGLMYSQLPHHILADVSLEETEENKTKGFDYLLKAAEAGDRQSMILVARAFDTGLNLSPDRCQDWSEALHWYNTALETTDCDEGGEYDGIQDEPQYALLAREAEMLLTGGFGLDKNPQRSGDLYTQAAEAAMEAMKGRLANQYYEKAEEAWAQMEE.

Position 2 is an N-acetylalanine (alanine 2). Residues 11-35 (EGVDGGGSSGAGRHGDSDTDSDDDE) are disordered. A compositionally biased stretch (gly residues) spans 13-22 (VDGGGSSGAG). 4 positions are modified to phosphoserine: serine 18, serine 27, serine 70, and serine 73. Serine 77 is subject to Phosphoserine; by autocatalysis and TRPM7. A calmodulin-binding region spans residues 80 to 93 (FKEAWKHAIEKAKH). Residues 115 to 325 (RYNAVTGEWL…ICQSMGLAPF (211 aa)) enclose the Alpha-type protein kinase domain. Serine 242 is subject to Phosphoserine. 295 to 301 (GDGNLGV) is a binding site for ATP. Threonine 347 is modified (phosphothreonine). Threonine 352 bears the Phosphothreonine; by autocatalysis mark. A disordered region spans residues 353-476 (EEKCGSPRIR…PESDEDSLGS (124 aa)). The residue at position 358 (serine 358) is a Phosphoserine; by MAPK13 and CDK1. A compositionally biased stretch (low complexity) spans 364 to 376 (LSGSRPPLLLRLS). Phosphoserine occurs at positions 365 and 391. Polar residues predominate over residues 385 to 403 (SDVTFDSLPSSPSSATPHS). Serine 397 is modified (phosphoserine; by AMPK). 2 stretches are compositionally biased toward basic and acidic residues: residues 421 to 435 (GPRD…RDSE) and 444 to 468 (SEKR…RRPE). Phosphoserine occurs at positions 434, 444, 469, 473, and 476. A Phosphoserine; by PKA modification is found at serine 499.

This sequence belongs to the protein kinase superfamily. Alpha-type protein kinase family. As to quaternary structure, monomer or homodimer. Interacts with Calmodulin/CALM1; this interaction is strictly required for phosphorylation activity. The N-terminus is blocked. In terms of processing, autophosphorylated at multiple residues, Thr-347 being the major site. Phosphorylated by AMP-activated protein kinase AMPK at Ser-397 leading to EEF2K activation and protein synthesis inhibition. Phosphorylated by TRPM7 at Ser-77 resulting in improved protein stability, higher EE2F phosphorylated and subsequently reduced rate of protein synthesis. Phosphorylation by other kinases such as CDK1 and MAPK13 at Ser-358 or RPS6KA1 and RPS6KB1 at Ser-365 instead decrease EEF2K activity and promote protein synthesis. In terms of tissue distribution, widely expressed, with high levels in reticulocytes and skeletal muscle.

It catalyses the reaction [translation elongation factor 2] + ATP = [translation elongation factor 2]-phosphate + ADP + H(+). Undergoes calcium/calmodulin-dependent intramolecular autophosphorylation, and this results in it becoming partially calcium/calmodulin-independent. In terms of biological role, threonine kinase that regulates protein synthesis by controlling the rate of peptide chain elongation. Upon activation by a variety of upstream kinases including AMPK or TRPM7, phosphorylates the elongation factor EEF2 at a single site, renders it unable to bind ribosomes and thus inactive. In turn, the rate of protein synthesis is reduced. This is Eukaryotic elongation factor 2 kinase from Rattus norvegicus (Rat).